A 465-amino-acid chain; its full sequence is Alpha-galacturonidase (465 aa).

11–78 (ITIAYIGGGS…GKWLYKACET (68 aa)) provides a ligand contact to NAD(+). Asn-157 contacts substrate. A Mn(2+)-binding site is contributed by Cys-179. The Proton donor role is filled by His-180. His-216 is a Mn(2+) binding site.

It belongs to the glycosyl hydrolase 4 family. In terms of assembly, homotetramer. Requires NAD(+) as cofactor. Mn(2+) is required as a cofactor.

The enzyme catalyses [(1-&gt;4)-alpha-D-galacturonosyl](n) + H2O = alpha-D-galacturonate + [(1-&gt;4)-alpha-D-galacturonosyl](n-1). Alpha-galacturonidase able to catalyze the hydrolysis of the chromogenic substrate p-nitrophenyl-alpha-D-galacturonic acid (pNPalphaGalUA). It is probable that alpha-1,4-di-galacturonate (GalUA(2)) is the naturally occurring substrate. This Thermoanaerobacterium saccharolyticum (strain DSM 8691 / JW/SL-YS485) protein is Alpha-galacturonidase.